The sequence spans 106 residues: Gibberellin-regulated protein 4 (106 aa).

Residues 1–25 (MAKSYGAIFLLTLIVLFMLQTMVMA) form the signal peptide.

This sequence belongs to the GASA family. Post-translationally, six disulfide bonds may be present. Expressed in flower buds, style, stamen filaments, vasculature of petals, root phloem, vasculature of cotyledons and rosette leaves and developing embryo.

Its subcellular location is the secreted. Its function is as follows. Gibberellin-regulated protein involved in the regulation of floral meristem and floral organ identity, and promotion of seed size and weight. May play a role in the promotion of gibberellin responses such as regulation of flowering under short-day conditions, seed germination and inhibition of gibberellin oxidase. Possesses redox activity in E.coli and may function in redox regulation in planta. The protein is Gibberellin-regulated protein 4 (GASA4) of Arabidopsis thaliana (Mouse-ear cress).